The sequence spans 126 residues: Allergen Tha p 1 (126 aa).

Positions 1-18 (MKLLILALTCAAAVWARP) are cleaved as a signal peptide.

The protein belongs to the insect A10/OS-D protein family.

Its subcellular location is the secreted. This Thaumetopoea pityocampa (Pine processionary moth) protein is Allergen Tha p 1.